A 580-amino-acid chain; its full sequence is Probable glucomannan 4-beta-mannosyltransferase 2 (580 aa).

Polar residues predominate over residues 1-12; sequence MSTNGGAPSQKR. Residues 1-33 form a disordered region; sequence MSTNGGAPSQKRSWLPSRPLLTTTTQTYPPPLL. The segment covering 15–27 has biased composition (low complexity); it reads LPSRPLLTTTTQT. Residues 85-105 traverse the membrane as a helical segment; it reads AVWACLAMSAMLVAEAAWMGL. Asp182 is a catalytic residue. Substrate is bound by residues Asp241 and Asp243. Residue Asp335 is part of the active site. The next 4 helical transmembrane spans lie at 414–434, 437–457, 528–548, and 554–574; these read AIAP…SAMV, VTIP…MNAI, IYIP…YDFV, and YYIY…GFVG.

This sequence belongs to the glycosyltransferase 2 family. Plant cellulose synthase-like A subfamily.

Its subcellular location is the golgi apparatus membrane. The catalysed reaction is GDP-mannose + (glucomannan)n = GDP + (glucomannan)n+1.. In terms of biological role, probable mannan synthase which consists of a 4-beta-mannosyltransferase activity on mannan using GDP-mannose. The beta-1,4-mannan product is the backbone for galactomannan synthesis by galactomannan galactosyltransferase. Galactomannan is a noncellulosic polysaccharides of plant cell wall. The protein is Probable glucomannan 4-beta-mannosyltransferase 2 of Oryza sativa subsp. japonica (Rice).